The chain runs to 171 residues: bZIP transcription factor 2 (171 aa).

Residues 1 to 24 are compositionally biased toward low complexity; it reads MASSSSTYRSSSSSDGGNNNPSDS. The interval 1-54 is disordered; the sequence is MASSSSTYRSSSSSDGGNNNPSDSVVTVDERKRKRMLSNRESARRSRMRKQKHV. Positions 29 to 92 constitute a bZIP domain; sequence DERKRKRMLS…MKIQAENSVL (64 aa). Residues 31-52 form a basic motif region; that stretch reads RKRKRMLSNRESARRSRMRKQK. The segment at 57–71 is leucine-zipper; the sequence is LTAQINQLSNDNRQI.

Forms heterodimers with BZIP9, BZIP10, BZIP25 and BZIP63. Component of a ternary complex composed of BZIP2-BZIP63 heterodimer and KIN10.

The protein resides in the nucleus. Its function is as follows. Transcription factor that binds to specific DNA sequences in target gene promoters. BZIP2-BZIP63-KIN10 complex binds to the ETFQO promoter to up-regulate its transcription. This is bZIP transcription factor 2 from Arabidopsis thaliana (Mouse-ear cress).